We begin with the raw amino-acid sequence, 194 residues long: Peptidyl-tRNA hydrolase (194 aa).

Tyr16 contacts tRNA. The active-site Proton acceptor is His21. Residues Phe67, Asn69, and Asn115 each contribute to the tRNA site.

This sequence belongs to the PTH family. As to quaternary structure, monomer.

The protein resides in the cytoplasm. The catalysed reaction is an N-acyl-L-alpha-aminoacyl-tRNA + H2O = an N-acyl-L-amino acid + a tRNA + H(+). Functionally, hydrolyzes ribosome-free peptidyl-tRNAs (with 1 or more amino acids incorporated), which drop off the ribosome during protein synthesis, or as a result of ribosome stalling. Catalyzes the release of premature peptidyl moieties from peptidyl-tRNA molecules trapped in stalled 50S ribosomal subunits, and thus maintains levels of free tRNAs and 50S ribosomes. The chain is Peptidyl-tRNA hydrolase from Escherichia coli O17:K52:H18 (strain UMN026 / ExPEC).